Reading from the N-terminus, the 85-residue chain is Cell division topological specificity factor (85 aa).

The protein belongs to the MinE family.

Its function is as follows. Prevents the cell division inhibition by proteins MinC and MinD at internal division sites while permitting inhibition at polar sites. This ensures cell division at the proper site by restricting the formation of a division septum at the midpoint of the long axis of the cell. This chain is Cell division topological specificity factor, found in Shewanella amazonensis (strain ATCC BAA-1098 / SB2B).